Consider the following 296-residue polypeptide: Sulfotransferase 1C2 (296 aa).

49–54 contributes to the 3'-phosphoadenylyl sulfate binding site; it reads KSGTTW. 107–109 serves as a coordination point for substrate; sequence RTH. The active-site Proton acceptor is H109. 3'-phosphoadenylyl sulfate contacts are provided by residues R131, S139, Y194, and 228–233; that span reads TSFEKM. S139 is subject to Phosphoserine. Position 254 is a phosphoserine (S254). 256 to 260 provides a ligand contact to 3'-phosphoadenylyl sulfate; sequence FMRKG.

It belongs to the sulfotransferase 1 family. As to expression, highly expressed in kidney and at lower levels in stomach and liver. More specifically found in the epithelia of proximal tubules of the kidney, of the bile duct, of the gastric mucosa, and in hepatocytes.

It is found in the cytoplasm. The protein resides in the lysosome. Its subcellular location is the mitochondrion. The catalysed reaction is a phenol + 3'-phosphoadenylyl sulfate = an aryl sulfate + adenosine 3',5'-bisphosphate + H(+). It catalyses the reaction cholesterol + 3'-phosphoadenylyl sulfate = cholesterol sulfate + adenosine 3',5'-bisphosphate + H(+). Sulfotransferase that utilizes 3'-phospho-5'-adenylyl sulfate (PAPS) to catalyze the sulfate conjugation of phenolic compounds. Does not transfer sulfate to steroids, dopamine, acetaminophen, or alpha-naphthol. Except in mitochondria, where it can add sulfate to cholesterol producing cholesterol sulfate, which alters mitochondrial membrane organization, and impacts protein complex mobility increasing state-III respiration, thereby modulating mitochondrial respiration. Catalyzes the sulfation of the carcinogenic N-hydroxy-2-acetylaminofluorene leading to highly reactive intermediates capable of forming DNA adducts, potentially resulting in mutagenesis. The chain is Sulfotransferase 1C2 (Sult1c2) from Rattus norvegicus (Rat).